Here is a 356-residue protein sequence, read N- to C-terminus: Peptide chain release factor 1 (356 aa).

Gln235 is subject to N5-methylglutamine.

This sequence belongs to the prokaryotic/mitochondrial release factor family. Post-translationally, methylated by PrmC. Methylation increases the termination efficiency of RF1.

The protein localises to the cytoplasm. Functionally, peptide chain release factor 1 directs the termination of translation in response to the peptide chain termination codons UAG and UAA. The protein is Peptide chain release factor 1 of Hydrogenobaculum sp. (strain Y04AAS1).